Reading from the N-terminus, the 763-residue chain is 5-methyltetrahydropteroyltriglutamate--homocysteine methyltransferase (763 aa).

Residues 16 to 19 and Lys-117 each bind 5-methyltetrahydropteroyltri-L-glutamate; that span reads RELK. L-homocysteine is bound by residues 438 to 440 and Glu-491; that span reads IGS. L-methionine is bound by residues 438–440 and Glu-491; that span reads IGS. 5-methyltetrahydropteroyltri-L-glutamate-binding positions include 522–523 and Trp-568; that span reads RC. Asp-606 is a binding site for L-homocysteine. Asp-606 lines the L-methionine pocket. Residue Glu-612 participates in 5-methyltetrahydropteroyltri-L-glutamate binding. Zn(2+) contacts are provided by His-648, Cys-650, and Glu-672. Residue His-701 is the Proton donor of the active site. Cys-733 lines the Zn(2+) pocket.

The protein belongs to the vitamin-B12 independent methionine synthase family. Zn(2+) is required as a cofactor.

It carries out the reaction 5-methyltetrahydropteroyltri-L-glutamate + L-homocysteine = tetrahydropteroyltri-L-glutamate + L-methionine. The protein operates within amino-acid biosynthesis; L-methionine biosynthesis via de novo pathway; L-methionine from L-homocysteine (MetE route): step 1/1. Its function is as follows. Catalyzes the transfer of a methyl group from 5-methyltetrahydrofolate to homocysteine resulting in methionine formation. In Pseudomonas paraeruginosa (strain DSM 24068 / PA7) (Pseudomonas aeruginosa (strain PA7)), this protein is 5-methyltetrahydropteroyltriglutamate--homocysteine methyltransferase.